Consider the following 534-residue polypeptide: Acetyltransferase MATC1 (534 aa).

Catalysis depends on proton acceptor residues His186 and Asp459.

This sequence belongs to the plant acyltransferase family.

It is found in the cell membrane. It participates in secondary metabolite biosynthesis. In terms of biological role, acetyltransferase; part of the gene cluster that mediates the biosynthesis of mannosylerythritol lipids (MELs), surface-active substances that enhance the availability of water-insoluble substrates. Mannosylerythritol lipid production is responsible for hemolytic activity of Ustilago maydis. Depending on the number of acetyl groups, mannosylerythritol lipids can be differentiated into MEL A (fully acetylated), MEL B and MEL C (monoacetylated at R-6 and R-4, respectively), and the fully deacetylated MEL D. The first step in the pathway is the generation of mannosylerythritol by the glycosyltransferase EMT1 which catalyzes the transfer of GDP-mannose to the C-4 atom of meso-erythritol. This reaction has to be stereospecific, since only mannosyl-D-erythritol is generated. The produced disaccharide is subsequently acylated with fatty acids of various lengths derived from the peroxisomal beta-oxidation by the peroxisomal acyltransferases MAC1 and MAC2 at positions C-2 and C-3, repectively. The existence of MEL derivatives which carry an acetyl group at C-2 implies that at least MAC1 also accepts acetyl-CoA as a donor. The final step of MEL biosynthesis is the acetylation of the fully acylated mannosylerythritol lipids catalyzed by the acetyl-CoA-dependent acetyltransferase MAT1. MAT1 displays a relaxed regioselectivity and is able to transfer acetylgroups to both positions C-4 and C-6 of the mannosyl moiety. In Mycosarcoma maydis (Corn smut fungus), this protein is Acetyltransferase MATC1.